The primary structure comprises 212 residues: Ion-translocating oxidoreductase complex subunit G (212 aa).

Residues 9–29 traverse the membrane as a helical segment; that stretch reads GLLLALFALLCTGLVAVVNQQ. At Thr176 the chain carries FMN phosphoryl threonine.

Belongs to the RnfG family. As to quaternary structure, the complex is composed of six subunits: RnfA, RnfB, RnfC, RnfD, RnfE and RnfG. FMN is required as a cofactor.

The protein resides in the cell inner membrane. In terms of biological role, part of a membrane-bound complex that couples electron transfer with translocation of ions across the membrane. The protein is Ion-translocating oxidoreductase complex subunit G of Shewanella oneidensis (strain ATCC 700550 / JCM 31522 / CIP 106686 / LMG 19005 / NCIMB 14063 / MR-1).